A 323-amino-acid chain; its full sequence is UDP-glucuronate 4-epimerase (323 aa).

Residue glycine 11–isoleucine 13 coordinates NAD(+). Residue tyrosine 152 is the Proton acceptor of the active site. Lysine 156 is a binding site for NAD(+).

It belongs to the NAD(P)-dependent epimerase/dehydratase family. NAD(+) serves as cofactor.

It catalyses the reaction UDP-alpha-D-glucuronate = UDP-alpha-D-galacturonate. Functionally, catalyzes the interconversion of UDP-D-glucuronic acid (UDP-GlcA) and UDP-D-galacturonic acid (UDP-GalA). The polypeptide is UDP-glucuronate 4-epimerase (Thermodesulfobacterium geofontis (strain OPF15)).